Here is a 372-residue protein sequence, read N- to C-terminus: Phospho-2-dehydro-3-deoxyheptonate aldolase, tyrosine-inhibited (372 aa).

The protein belongs to the class-I DAHP synthase family.

It is found in the cytoplasm. The protein resides in the nucleus. The enzyme catalyses D-erythrose 4-phosphate + phosphoenolpyruvate + H2O = 7-phospho-2-dehydro-3-deoxy-D-arabino-heptonate + phosphate. The protein operates within metabolic intermediate biosynthesis; chorismate biosynthesis; chorismate from D-erythrose 4-phosphate and phosphoenolpyruvate: step 1/7. Stereospecific condensation of phosphoenolpyruvate (PEP) and D-erythrose-4-phosphate (E4P) giving rise to 3-deoxy-D-arabino-heptulosonate-7-phosphate (DAHP). The chain is Phospho-2-dehydro-3-deoxyheptonate aldolase, tyrosine-inhibited (aro4) from Schizosaccharomyces pombe (strain 972 / ATCC 24843) (Fission yeast).